The sequence spans 494 residues: Tripartite motif-containing protein 5 (494 aa).

The residue at position 2 (A2) is an N-acetylalanine. The segment at 15 to 59 (CPICLELLTQPLSLDCGHSFCQACLTANHKTSMPDEGERSCPVCR) adopts an RING-type zinc-finger fold. S86 is subject to Phosphoserine. A B box-type zinc finger spans residues 91-133 (QKVDHCARHGEKLLLFCQEDRKVICWLCERSQEHRGHHTFLTE). 4 residues coordinate Zn(2+): C96, H99, C118, and H124. The stretch at 132 to 241 (TEEVAQEYQV…LISDLEHRLQ (110 aa)) forms a coiled coil. Positions 186 to 199 (FEQLRHILDWVESN) are required for interaction with GABARAP and for autophagy. One can recognise a B30.2/SPRY domain in the interval 282–494 (LKVMLEVLRE…VPMTLCSPSS (213 aa)).

This sequence belongs to the TRIM/RBCC family. As to quaternary structure, can form homodimers and homotrimers. In addition to lower-order dimerization, also exhibits a higher-order multimerization and both low- and high-order multimerizations are essential for its restriction activity. Interacts with BTBD1 and BTBD2. Interacts with PSMC4, PSMC5, PSMD7 and HSPA8/HSC70. Interacts (via B30.2/SPRY domain) with HSPA1A/B. Interacts with PSMC2, MAP3K7/TAK1, TAB2 and TAB3. Interacts with SQSTM1. Interacts with TRIM6 and TRIM34. Interacts with ULK1 (phosphorylated form), GABARAP, GABARAPL1, GABARAPL2, MAP1LC3A, MAP1LC3C and BECN1. Degraded in a proteasome-independent fashion in the absence of viral infection but in a proteasome-dependent fashion following exposure to restriction sensitive virus. In terms of processing, autoubiquitinated in a RING finger- and UBE2D2-dependent manner. Monoubiquitinated by TRIM21. Deubiquitinated by Yersinia YopJ. Ubiquitination may not lead to proteasomal degradation.

Its subcellular location is the cytoplasm. It localises to the nucleus. It carries out the reaction S-ubiquitinyl-[E2 ubiquitin-conjugating enzyme]-L-cysteine + [acceptor protein]-L-lysine = [E2 ubiquitin-conjugating enzyme]-L-cysteine + N(6)-ubiquitinyl-[acceptor protein]-L-lysine.. It participates in protein modification; protein ubiquitination. Its function is as follows. Capsid-specific restriction factor that prevents infection from non-host-adapted retroviruses. Blocks viral replication early in the life cycle, after viral entry but before reverse transcription. In addition to acting as a capsid-specific restriction factor, also acts as a pattern recognition receptor that activates innate immune signaling in response to the retroviral capsid lattice. Binding to the viral capsid triggers its E3 ubiquitin ligase activity, and in concert with the heterodimeric ubiquitin conjugating enzyme complex UBE2V1-UBE2N (also known as UBC13-UEV1A complex) generates 'Lys-63'-linked polyubiquitin chains, which in turn are catalysts in the autophosphorylation of the MAP3K7/TAK1 complex (includes TAK1, TAB2, and TAB3). Activation of the MAP3K7/TAK1 complex by autophosphorylation results in the induction and expression of NF-kappa-B and MAPK-responsive inflammatory genes, thereby leading to an innate immune response in the infected cell. Plays a role in regulating autophagy through activation of autophagy regulator BECN1 by causing its dissociation from its inhibitors BCL2 and TAB2. The chain is Tripartite motif-containing protein 5 (TRIM5) from Symphalangus syndactylus (Siamang).